We begin with the raw amino-acid sequence, 661 residues long: Polyadenylate-binding protein, cytoplasmic and nuclear (661 aa).

Residues 1–11 (MSAAETNQVQE) are compositionally biased toward polar residues. Residues 1 to 61 (MSAAETNQVQ…SAEEQGESSG (61 aa)) form a disordered region. A compositionally biased stretch (low complexity) spans 20-51 (SSSSPAAGGATTATTTNNAESSDATSSSVPAD). 4 RRM domains span residues 67-145 (ASLY…WSQR), 155-232 (GNIF…KHVS), 248-325 (TNIY…RAQK), and 351-428 (VNLF…LAQR). Residues 473–563 (FPPNGRGNAP…PNRPAGGNVP (91 aa)) form a disordered region. Over residues 501–511 (EQWPRPGPNGQ) the composition is skewed to pro residues. Positions 523-532 (QDFNGQNMRP) are enriched in polar residues. A compositionally biased stretch (low complexity) spans 533–549 (QQQQQQQQQQQQQQQQQ). The 82-residue stretch at 563–644 (PAKDLAALIA…ALNAFEEYKN (82 aa)) folds into the PABC domain.

It belongs to the polyadenylate-binding protein type-1 family.

Its subcellular location is the cytoplasm. It localises to the nucleus. Its function is as follows. Binds the poly(A) tail of mRNA. Appears to be an important mediator of the multiple roles of the poly(A) tail in mRNA biogenesis, stability and translation. In the nucleus, involved in both mRNA cleavage and polyadenylation. Is also required for efficient mRNA export to the cytoplasm. Acts in concert with a poly(A)-specific nuclease (PAN) to affect poly(A) tail shortening, which may occur concomitantly with either nucleocytoplasmic mRNA transport or translational initiation. In the cytoplasm, stimulates translation initiation and regulates mRNA decay through translation termination-coupled poly(A) shortening, probably mediated by PAN. The protein is Polyadenylate-binding protein, cytoplasmic and nuclear (PAB1) of Lodderomyces elongisporus (strain ATCC 11503 / CBS 2605 / JCM 1781 / NBRC 1676 / NRRL YB-4239) (Yeast).